Here is a 223-residue protein sequence, read N- to C-terminus: Glutathione-specific gamma-glutamylcyclotransferase 1 (223 aa).

The tract at residues 1 to 26 (MKQESASQSTPPPSLSPAPSSAQPSW) is disordered. Residue 36-41 (IFGYGS) participates in substrate binding. Catalysis depends on glutamate 116, which acts as the Proton acceptor.

The protein belongs to the gamma-glutamylcyclotransferase family. ChaC subfamily. As to quaternary structure, interacts with NOTCH1 (via extracellular region). In terms of tissue distribution, widely expressed, with high expression in forebrain and anterior spinal cord. Expressed at intermediate level in the dorsal aorta and heart. Present throughout adult brain (at protein level).

The protein resides in the cytoplasm. The protein localises to the cytosol. It is found in the golgi apparatus. It localises to the trans-Golgi network. It catalyses the reaction glutathione = L-cysteinylglycine + 5-oxo-L-proline. In terms of biological role, catalyzes the cleavage of glutathione into 5-oxo-L-proline and a Cys-Gly dipeptide. Acts specifically on glutathione, but not on other gamma-glutamyl peptides. Glutathione depletion is an important factor for apoptosis initiation and execution. Acts as a pro-apoptotic component of the unfolded protein response pathway by mediating the pro-apoptotic effects of the ATF4-ATF3-DDIT3/CHOP cascade. Negative regulator of Notch signaling pathway involved in embryonic neurogenesis: acts by inhibiting Notch cleavage by furin, maintaining Notch in an immature inactive form, thereby promoting neurogenesis in embryos. This is Glutathione-specific gamma-glutamylcyclotransferase 1 from Mus musculus (Mouse).